Reading from the N-terminus, the 545-residue chain is Phenylalanine--tRNA ligase beta subunit (545 aa).

The B5 domain maps to 266–342; that stretch reads LSPALRNINV…IGAGFGNLEA (77 aa). Residues Asp320, Asp326, Glu329, and Asp330 each contribute to the Mg(2+) site.

This sequence belongs to the phenylalanyl-tRNA synthetase beta subunit family. Type 2 subfamily. As to quaternary structure, tetramer of two alpha and two beta subunits. Requires Mg(2+) as cofactor.

The protein localises to the cytoplasm. The enzyme catalyses tRNA(Phe) + L-phenylalanine + ATP = L-phenylalanyl-tRNA(Phe) + AMP + diphosphate + H(+). This Methanospirillum hungatei JF-1 (strain ATCC 27890 / DSM 864 / NBRC 100397 / JF-1) protein is Phenylalanine--tRNA ligase beta subunit.